A 300-amino-acid chain; its full sequence is Enoyl-CoA hydratase domain-containing protein 3, mitochondrial (300 aa).

The N-terminal 66 residues, 1–66, are a transit peptide targeting the mitochondrion; sequence MALVAGLRAF…RNIVLSNPRR (66 aa). The segment at 32–54 is disordered; that stretch reads SPGSARPAGPESEPRLTSTRQQD. Lys-110 carries the N6-succinyllysine modification.

The protein belongs to the enoyl-CoA hydratase/isomerase family.

The protein localises to the mitochondrion. May play a role in fatty acid biosynthesis and insulin sensitivity. The sequence is that of Enoyl-CoA hydratase domain-containing protein 3, mitochondrial from Rattus norvegicus (Rat).